The following is a 161-amino-acid chain: Ribonuclease H (161 aa).

The 145-residue stretch at 5-149 (EKLAIAAATD…VDAIAVAFSK (145 aa)) folds into the RNase H type-1 domain. Mg(2+)-binding residues include Asp14, Glu53, Asp78, and Asp141.

Belongs to the RNase H family. As to quaternary structure, monomer. Requires Mg(2+) as cofactor.

It is found in the cytoplasm. It catalyses the reaction Endonucleolytic cleavage to 5'-phosphomonoester.. Endonuclease that specifically degrades the RNA of RNA-DNA hybrids. The polypeptide is Ribonuclease H (Prochlorococcus marinus (strain NATL1A)).